A 110-amino-acid chain; its full sequence is MEAKAIAKYIRLSPQKARLVAANILGRPVEEAMNILKFTPKKSAKIIGKVLHSAVANAEQISGVDIDNLTVKQVIINPGPTHKRIMTRSMGRAFRIVKRTSHITVVVAEN.

It belongs to the universal ribosomal protein uL22 family. In terms of assembly, part of the 50S ribosomal subunit.

Its function is as follows. This protein binds specifically to 23S rRNA; its binding is stimulated by other ribosomal proteins, e.g. L4, L17, and L20. It is important during the early stages of 50S assembly. It makes multiple contacts with different domains of the 23S rRNA in the assembled 50S subunit and ribosome. The globular domain of the protein is located near the polypeptide exit tunnel on the outside of the subunit, while an extended beta-hairpin is found that lines the wall of the exit tunnel in the center of the 70S ribosome. This Solidesulfovibrio magneticus (strain ATCC 700980 / DSM 13731 / RS-1) (Desulfovibrio magneticus) protein is Large ribosomal subunit protein uL22.